A 472-amino-acid chain; its full sequence is Protein hedgehog (472 aa).

C84 carries the N-palmitoyl cysteine lipid modification. 5 residues coordinate Ca(2+): E149, D154, E185, D188, and D190. A lipid anchor (Cholesterol glycine ester) is attached at G256.

It belongs to the hedgehog family. In terms of assembly, interacts with shf. The C-terminal part of the hedgehog protein precursor displays an autoproteolysis activity that results in the cleavage of the full-length protein into two parts (N-product and C-product). In addition, the C-terminal part displays a cholesterol transferase activity that results by the covalent attachment of a cholesterol moiety to the C-terminal of the newly generated N-product. The N-product is the active species in both local and long-range signaling, whereas the C-product has no signaling activity. Post-translationally, cholesterylation is required for N-product targeting to lipid rafts and multimerization. In terms of processing, N-palmitoylation by Rasp of the hedgehog N-product, within the secretory pathway, is required for the embryonic and larval patterning activities of the hedgehog signal.

The protein localises to the nucleus. It localises to the cytoplasm. The protein resides in the cell membrane. The enzyme catalyses glycyl-L-cysteinyl-[protein] + cholesterol + H(+) = [protein]-C-terminal glycyl cholesterol ester + N-terminal L-cysteinyl-[protein]. Its function is as follows. The C-terminal part of the hedgehog protein precursor displays an autoproteolysis activity that results in the cleavage of the full-length protein into two parts (N-product and C-product). In addition, the C-terminal part displays a cholesterol transferase activity that results by the covalent attachment of a cholesterol moiety to the C-terminal of the newly generated N-product. Once cleaved, the C-product has no signaling activity and diffuses from the cell. In terms of biological role, the dually lipidated hedgehog protein N-product is a morphogen which is essential for a variety of patterning events during development. Establishes the anterior-posterior axis of the embryonic segments and patterns the larval imaginal disks. Binds to the patched (ptc) receptor, which functions in association with smoothened (smo), to activate the transcription of target genes wingless (wg), decapentaplegic (dpp) and ptc. In the absence of hh, ptc represses the constitutive signaling activity of smo through fused (fu). Essential component of a signaling pathway which regulates the Duox-dependent gut immune response to bacterial uracil; required to activate Cad99C-dependent endosome formation, norpA-dependent Ca2+ mobilization and p38 MAPK, which are essential steps in the Duox-dependent production of reactive oxygen species (ROS) in response to intestinal bacterial infection. During photoreceptor differentiation, it up-regulates transcription of Ubr3, which in turn promotes the hh-signaling pathway by mediating the ubiquitination and degradation of cos. The protein is Protein hedgehog of Drosophila ananassae (Fruit fly).